The sequence spans 517 residues: T-box transcription factor TBX5 (517 aa).

A disordered region spans residues 1–46; sequence MADADEGFGLARTPLEPDSKDRSCDSKPESALGAPSKSPSSPQAAF. Positions 15 to 28 are enriched in basic and acidic residues; sequence LEPDSKDRSCDSKP. A compositionally biased stretch (low complexity) spans 34-45; that stretch reads APSKSPSSPQAA. A DNA-binding region (T-box) is located at residues 58–238; it reads LHERELWLKF…NNPFAKGFRG (181 aa). Disordered regions lie at residues 270–313 and 331–369; these read HSPF…YPLA and SSTE…SYRT. A compositionally biased stretch (polar residues) spans 271–300; sequence SPFSSETRALSTSSNLGSQYQCENGVSGPS. The residue at position 338 (K338) is an N6-acetyllysine. A compositionally biased stretch (polar residues) spans 357 to 369; sequence YPQQQGLSTSYRT.

In terms of assembly, monomer. Homodimer (via the T-box); binds DNA as homodimer. Interacts (via the T-box) with NKX2-5 (via the homeobox); this complex binds DNA. Interacts with GATA4. Interacts with KAT2A and KAT2B. Post-translationally, acetylation at Lys-338 by KAT2A and KAT2B promotes nuclear retention.

It is found in the nucleus. Its subcellular location is the cytoplasm. Its function is as follows. DNA-binding protein that regulates the transcription of several genes and is involved in heart development and limb pattern formation. Binds to the core DNA motif of NPPA promoter. The polypeptide is T-box transcription factor TBX5 (Tbx5) (Rattus norvegicus (Rat)).